Consider the following 286-residue polypeptide: Sulfur carrier protein FdhD (286 aa).

Cysteine 110 serves as the catalytic Cysteine persulfide intermediate. 247–252 (FARGEK) contributes to the Mo-bis(molybdopterin guanine dinucleotide) binding site.

The protein belongs to the FdhD family.

It localises to the cytoplasm. In terms of biological role, required for formate dehydrogenase (FDH) activity. Acts as a sulfur carrier protein that transfers sulfur from IscS to the molybdenum cofactor prior to its insertion into FDH. This is Sulfur carrier protein FdhD from Wolinella succinogenes (strain ATCC 29543 / DSM 1740 / CCUG 13145 / JCM 31913 / LMG 7466 / NCTC 11488 / FDC 602W) (Vibrio succinogenes).